Reading from the N-terminus, the 266-residue chain is Protein PAE0875 (266 aa).

Belongs to the CinA family.

This is Protein PAE0875 from Pyrobaculum aerophilum (strain ATCC 51768 / DSM 7523 / JCM 9630 / CIP 104966 / NBRC 100827 / IM2).